Here is a 254-residue protein sequence, read N- to C-terminus: uncharacterized protein (254 aa).

The 68-residue stretch at 14–81 folds into the S4 RNA-binding domain; that stretch reads IRLQKVLSQA…DSLVYLALNK (68 aa). Asp-119 acts as the Nucleophile in catalysis.

The protein belongs to the pseudouridine synthase RsuA family.

It carries out the reaction a uridine in RNA = a pseudouridine in RNA. This is an uncharacterized protein from Mycobacterium bovis (strain ATCC BAA-935 / AF2122/97).